The chain runs to 120 residues: NAD(P)H-quinone oxidoreductase subunit 3, chloroplastic (120 aa).

3 helical membrane-spanning segments follow: residues 9–29 (IFWA…LISG), 64–84 (MFAL…PWAM), and 88–108 (VLGV…IVGS).

It belongs to the complex I subunit 3 family. NDH is composed of at least 16 different subunits, 5 of which are encoded in the nucleus.

The protein localises to the plastid. It localises to the chloroplast thylakoid membrane. The enzyme catalyses a plastoquinone + NADH + (n+1) H(+)(in) = a plastoquinol + NAD(+) + n H(+)(out). The catalysed reaction is a plastoquinone + NADPH + (n+1) H(+)(in) = a plastoquinol + NADP(+) + n H(+)(out). NDH shuttles electrons from NAD(P)H:plastoquinone, via FMN and iron-sulfur (Fe-S) centers, to quinones in the photosynthetic chain and possibly in a chloroplast respiratory chain. The immediate electron acceptor for the enzyme in this species is believed to be plastoquinone. Couples the redox reaction to proton translocation, and thus conserves the redox energy in a proton gradient. This Buxus microphylla (Littleleaf boxwood) protein is NAD(P)H-quinone oxidoreductase subunit 3, chloroplastic.